We begin with the raw amino-acid sequence, 535 residues long: Phosphoenolpyruvate carboxykinase (ATP) 1 (535 aa).

Residues Arg-58, Tyr-193, and Lys-199 each contribute to the substrate site. ATP-binding positions include Lys-199, His-218, and 234–242 (GLSGTGKTT). The Mn(2+) site is built by Lys-199 and His-218. Asp-255 contacts Mn(2+). Residues Glu-283, Arg-321, 440–441 (RI), and Thr-446 each bind ATP. Residue Arg-321 participates in substrate binding.

Belongs to the phosphoenolpyruvate carboxykinase (ATP) family. It depends on Mn(2+) as a cofactor.

The protein resides in the cytoplasm. It catalyses the reaction oxaloacetate + ATP = phosphoenolpyruvate + ADP + CO2. It functions in the pathway carbohydrate biosynthesis; gluconeogenesis. Involved in the gluconeogenesis. Catalyzes the conversion of oxaloacetate (OAA) to phosphoenolpyruvate (PEP) through direct phosphoryl transfer between the nucleoside triphosphate and OAA. This chain is Phosphoenolpyruvate carboxykinase (ATP) 1, found in Salinibacter ruber (strain DSM 13855 / M31).